The primary structure comprises 544 residues: Tyrosyl-DNA phosphodiesterase 1 (544 aa).

H182 serves as the catalytic Nucleophile. A substrate-binding site is contributed by K184. Residues 312–316 are interaction with DNA; it reads SIGTS. H432 serves as the catalytic Proton donor/acceptor. K434 is a substrate binding site.

This sequence belongs to the tyrosyl-DNA phosphodiesterase family.

It is found in the nucleus. In terms of biological role, DNA repair enzyme that can remove a variety of covalent adducts from DNA through hydrolysis of a 3'-phosphodiester bond, giving rise to DNA with a free 3' phosphate. Catalyzes the hydrolysis of dead-end complexes between DNA and the topoisomerase I active site tyrosine residue. Hydrolyzes 3'-phosphoglycolates on protruding 3' ends on DNA double-strand breaks due to DNA damage by radiation and free radicals. Also cleaves 5' phosphotyrosyl adducts resulting from dead-end complexes between DNA and the active site tyrosine of topoisomerase II. Contributes to DNA repair after radiation damage. Acts on blunt-ended double-strand DNA breaks and on single-stranded DNA. May have low 3'exonuclease activity and may be able to remove a single nucleoside from the 3'end of DNA and RNA molecules with 3'hydroxyl groups. Has no exonuclease activity towards DNA or RNA with a 3'phosphate. The polypeptide is Tyrosyl-DNA phosphodiesterase 1 (TDP1) (Saccharomyces cerevisiae (strain ATCC 204508 / S288c) (Baker's yeast)).